A 135-amino-acid chain; its full sequence is Protein PsiE homolog (135 aa).

Helical transmembrane passes span 20–40, 54–74, 82–102, and 107–127; these read VGLIMLAAILVVFLVKETIHL, YMLIEGIVIYFLYFEFIALIV, HFPLRYFIYIGITAIIRLIIV, and PIDTLIYSGSILVLVVTLYLA.

It belongs to the PsiE family.

Its subcellular location is the cell inner membrane. This is Protein PsiE homolog from Yersinia pestis (strain Pestoides F).